We begin with the raw amino-acid sequence, 374 residues long: Protein RecA (374 aa).

66–73 provides a ligand contact to ATP; the sequence is GPESSGKT. The interval 326–374 is disordered; it reads KLGVGVHPEESATEPGADAASAAPADAAPAVPAPTTAKATKSKATAAKS. Residues 338 to 374 are compositionally biased toward low complexity; that stretch reads TEPGADAASAAPADAAPAVPAPTTAKATKSKATAAKS.

This sequence belongs to the RecA family.

It is found in the cytoplasm. Functionally, can catalyze the hydrolysis of ATP in the presence of single-stranded DNA, the ATP-dependent uptake of single-stranded DNA by duplex DNA, and the ATP-dependent hybridization of homologous single-stranded DNAs. It interacts with LexA causing its activation and leading to its autocatalytic cleavage. In Streptomyces coelicolor (strain ATCC BAA-471 / A3(2) / M145), this protein is Protein RecA.